A 561-amino-acid chain; its full sequence is Acylcarnitine hydrolase (561 aa).

Positions 1 to 26 (MTRNQLHNWLNAGFFGLLLLLIHVQG) are cleaved as a signal peptide. Cysteines 97 and 125 form a disulfide. Residue S230 is the Acyl-ester intermediate of the active site. C282 and C293 are oxidised to a cystine. Active-site charge relay system residues include E347 and H459. The Prevents secretion from ER motif lies at 558–561 (HREL).

This sequence belongs to the type-B carboxylesterase/lipase family. In terms of tissue distribution, detected in liver (at protein level).

The protein localises to the microsome. It localises to the endoplasmic reticulum. The catalysed reaction is an O-acyl-(R)-carnitine + H2O = (R)-carnitine + a fatty acid + H(+). It carries out the reaction all-trans-retinyl hexadecanoate + H2O = all-trans-retinol + hexadecanoate + H(+). Its function is as follows. Hydrolase with high activity towards palmitoylcarnitine. Is also active with p-nitrophenylacetate and alpha-naphthylacetate. May also hydrolyze retinyl esters. The polypeptide is Acylcarnitine hydrolase (Mus musculus (Mouse)).